Here is a 570-residue protein sequence, read N- to C-terminus: MSEHKWWKEAVVYQIWPASYKDSNGDGVGDIPGIISTLDYIASLGVTTVWLSPMYDSPQDDMGYDVSDYENVYSKYGTLQDMDRLIAGCHDRGLKLILDLVINHTSVEHKWFKESRSSKDNPKRDWYIWKPPRIDSNGNKHPPNNWGSYFSGSAWKYDELTGEYYLHLFAESQPDLNWENKECREAIYNSAIKFWLDKGVDGFRIDTAGMYSKYQHFKDAPVAFPDTEFQPCEIYHKNGPRIHEFHKEMAKVMEPYDTMTVGEVGHSTREQALKYVSAAEKEMNMMFLFDVVELGSDPRDRFRYNGFDLVDLKKAIKSQGEFAEGTDAWSTVFIENHDQARAISRFGNDSPEFRVLSGKAIAMLQCCLTGTLFIYQGQEIGMTNVPRSWPIEEYKDINTINYYRAFKEKYGKDADYKQKEEKLVDVINRLARDNARTPVQWSHQQYAGFSEVEPWMRVNDNYKEINVEDQDGDDHSLLNFYRKLLKLRGEYKDLFVYGEMKFLDFDDKKLFTFAKEAPGSPVAYIVINFSGEDVKFEPLIKGNYKLVLTNVDKDSKDALSPYEARMYVVD.

Catalysis depends on aspartate 206, which acts as the Nucleophile. The Proton donor role is filled by glutamate 263.

The protein belongs to the glycosyl hydrolase 13 family.

It catalyses the reaction Hydrolysis of terminal, non-reducing (1-&gt;4)-linked alpha-D-glucose residues with release of alpha-D-glucose.. The sequence is that of Alpha-glucosidase (MAL2) from Candida albicans (Yeast).